Reading from the N-terminus, the 241-residue chain is Sugar fermentation stimulation protein homolog (241 aa).

Belongs to the SfsA family.

In Thermosynechococcus vestitus (strain NIES-2133 / IAM M-273 / BP-1), this protein is Sugar fermentation stimulation protein homolog.